The chain runs to 315 residues: L-lactate dehydrogenase (315 aa).

Residues valine 16, aspartate 37, and 81-82 contribute to the NAD(+) site; that span reads GA. Residues glutamine 84, arginine 90, and 122–125 each bind substrate; that span reads NPVD. Residues 120–122 and serine 145 each bind NAD(+); that span reads VSN. Residue 150–153 coordinates substrate; the sequence is DTAR. Beta-D-fructose 1,6-bisphosphate is bound by residues arginine 155 and histidine 170. The active-site Proton acceptor is the histidine 177. Tyrosine 224 is subject to Phosphotyrosine. Threonine 233 serves as a coordination point for substrate.

It belongs to the LDH/MDH superfamily. LDH family. In terms of assembly, homotetramer.

It is found in the cytoplasm. It catalyses the reaction (S)-lactate + NAD(+) = pyruvate + NADH + H(+). It functions in the pathway fermentation; pyruvate fermentation to lactate; (S)-lactate from pyruvate: step 1/1. Allosterically activated by fructose 1,6-bisphosphate (FBP). Functionally, catalyzes the conversion of lactate to pyruvate. The chain is L-lactate dehydrogenase from Treponema denticola (strain ATCC 35405 / DSM 14222 / CIP 103919 / JCM 8153 / KCTC 15104).